The chain runs to 303 residues: MISAKSVKELRERTGAGMMDCKKALTETDGDIEKAVEVLREKGLAAAAKKSGRVAAEGLVKTYISEDKKSGAIVELNCETDFVAANEDFIAFADALAKIATSTSATTVEELVNEKFDAEATIQEALTGLIARLGENMTVRRFVKFSVDNGVVKSYIHGGGRIGVLVEVACDVESPAVEEVAKELCMQIAAANPLFLSKEEVDQDSIEKEKEIYRVQALNEGKPEKIVEKMVMGRIQKYYKEVCLLEQLWVKDSDKTITKFIDEKAKEAGSAIKVNRFVRFERGEGIEKVEENFAEEVAKQLGK.

Residues 80 to 83 (TDFV) are involved in Mg(2+) ion dislocation from EF-Tu.

This sequence belongs to the EF-Ts family.

The protein localises to the cytoplasm. In terms of biological role, associates with the EF-Tu.GDP complex and induces the exchange of GDP to GTP. It remains bound to the aminoacyl-tRNA.EF-Tu.GTP complex up to the GTP hydrolysis stage on the ribosome. The chain is Elongation factor Ts from Clostridium botulinum (strain Alaska E43 / Type E3).